A 130-amino-acid polypeptide reads, in one-letter code: Small ribosomal subunit protein uS11 (130 aa).

It belongs to the universal ribosomal protein uS11 family. As to quaternary structure, part of the 30S ribosomal subunit. Interacts with proteins S7 and S18. Binds to IF-3.

Its function is as follows. Located on the platform of the 30S subunit, it bridges several disparate RNA helices of the 16S rRNA. Forms part of the Shine-Dalgarno cleft in the 70S ribosome. This Campylobacter lari (strain RM2100 / D67 / ATCC BAA-1060) protein is Small ribosomal subunit protein uS11.